A 341-amino-acid chain; its full sequence is Holliday junction branch migration complex subunit RuvB (341 aa).

Residues 1–182 (MTSSDPTLRP…FGIPTRLQFY (182 aa)) form a large ATPase domain (RuvB-L) region. Residues Leu21, Arg22, Gly63, Lys66, Thr67, Thr68, 129-131 (EDF), Arg172, Tyr182, and Arg219 contribute to the ATP site. Mg(2+) is bound at residue Thr67. Residues 183-253 (TEDELDLIVA…IADRALTRLG (71 aa)) form a small ATPAse domain (RuvB-S) region. Positions 256–341 (HLGLDLGDRR…KGPGQSDLFG (86 aa)) are head domain (RuvB-H). DNA is bound by residues Arg292, Arg311, and Arg316.

The protein belongs to the RuvB family. In terms of assembly, homohexamer. Forms an RuvA(8)-RuvB(12)-Holliday junction (HJ) complex. HJ DNA is sandwiched between 2 RuvA tetramers; dsDNA enters through RuvA and exits via RuvB. An RuvB hexamer assembles on each DNA strand where it exits the tetramer. Each RuvB hexamer is contacted by two RuvA subunits (via domain III) on 2 adjacent RuvB subunits; this complex drives branch migration. In the full resolvosome a probable DNA-RuvA(4)-RuvB(12)-RuvC(2) complex forms which resolves the HJ.

The protein localises to the cytoplasm. It catalyses the reaction ATP + H2O = ADP + phosphate + H(+). Its function is as follows. The RuvA-RuvB-RuvC complex processes Holliday junction (HJ) DNA during genetic recombination and DNA repair, while the RuvA-RuvB complex plays an important role in the rescue of blocked DNA replication forks via replication fork reversal (RFR). RuvA specifically binds to HJ cruciform DNA, conferring on it an open structure. The RuvB hexamer acts as an ATP-dependent pump, pulling dsDNA into and through the RuvAB complex. RuvB forms 2 homohexamers on either side of HJ DNA bound by 1 or 2 RuvA tetramers; 4 subunits per hexamer contact DNA at a time. Coordinated motions by a converter formed by DNA-disengaged RuvB subunits stimulates ATP hydrolysis and nucleotide exchange. Immobilization of the converter enables RuvB to convert the ATP-contained energy into a lever motion, pulling 2 nucleotides of DNA out of the RuvA tetramer per ATP hydrolyzed, thus driving DNA branch migration. The RuvB motors rotate together with the DNA substrate, which together with the progressing nucleotide cycle form the mechanistic basis for DNA recombination by continuous HJ branch migration. Branch migration allows RuvC to scan DNA until it finds its consensus sequence, where it cleaves and resolves cruciform DNA. In Cereibacter sphaeroides (strain ATCC 17029 / ATH 2.4.9) (Rhodobacter sphaeroides), this protein is Holliday junction branch migration complex subunit RuvB.